A 278-amino-acid polypeptide reads, in one-letter code: NAD-capped RNA hydrolase NudC (278 aa).

R84 contributes to the substrate binding site. C114 and C117 together coordinate Zn(2+). E127 provides a ligand contact to substrate. C132 provides a ligand contact to Zn(2+). A substrate-binding site is contributed by Y140. Positions 141-264 (PRISPSMIVL…SIARYLIEAY (124 aa)) constitute a Nudix hydrolase domain. A divalent metal cation contacts are provided by A174, E190, and E194. A Nudix box motif is present at residues 175-196 (GFVEPGESAEDCVHREVMEEVQ). 208–215 (QCWPFPHS) contributes to the substrate binding site. Position 235 (E235) interacts with a divalent metal cation. A substrate-binding site is contributed by A257.

Belongs to the Nudix hydrolase family. NudC subfamily. Homodimer. Requires Mg(2+) as cofactor. Mn(2+) is required as a cofactor. It depends on Zn(2+) as a cofactor.

The catalysed reaction is a 5'-end NAD(+)-phospho-ribonucleoside in mRNA + H2O = a 5'-end phospho-adenosine-phospho-ribonucleoside in mRNA + beta-nicotinamide D-ribonucleotide + 2 H(+). It carries out the reaction NAD(+) + H2O = beta-nicotinamide D-ribonucleotide + AMP + 2 H(+). The enzyme catalyses NADH + H2O = reduced beta-nicotinamide D-ribonucleotide + AMP + 2 H(+). Its function is as follows. mRNA decapping enzyme that specifically removes the nicotinamide adenine dinucleotide (NAD) cap from a subset of mRNAs by hydrolyzing the diphosphate linkage to produce nicotinamide mononucleotide (NMN) and 5' monophosphate mRNA. The NAD-cap is present at the 5'-end of some mRNAs and stabilizes RNA against 5'-processing. Has preference for mRNAs with a 5'-end purine. Catalyzes the hydrolysis of a broad range of dinucleotide pyrophosphates. The sequence is that of NAD-capped RNA hydrolase NudC from Pseudomonas syringae pv. syringae (strain B728a).